A 535-amino-acid chain; its full sequence is Dimethylaniline monooxygenase [N-oxide-forming] 2 (535 aa).

Position 2 is an N-acetylalanine (alanine 2). Residues 9 to 13 (GAGVS), glutamate 32, 40 to 41 (LW), and 61 to 62 (NT) each bind FAD. NADP(+)-binding positions include 60–61 (TN) and 195–198 (SASD). Lysine 492 is covalently cross-linked (Glycyl lysine isopeptide (Lys-Gly) (interchain with G-Cter in SUMO)). A helical transmembrane segment spans residues 510-530 (FPVSFLLKFLGLFALVLAFLF).

Belongs to the FMO family. FAD is required as a cofactor. Mg(2+) serves as cofactor. In terms of tissue distribution, lung.

The protein resides in the microsome membrane. It is found in the endoplasmic reticulum membrane. It carries out the reaction N,N-dimethylaniline + NADPH + O2 + H(+) = N,N-dimethylaniline N-oxide + NADP(+) + H2O. Its function is as follows. Catalyzes the oxidative metabolism of numerous xenobiotics, including mainly therapeutic drugs and insecticides that contain a soft nucleophile, most commonly nitrogen and sulfur and participates to their bioactivation. Most drug substrates are tertiary amines such as prochlorperazine and trifluoperazine which are N-oxygenated to form the N-oxide, or sulfides such as thiourea and ethionamide, which are S-oxygenated to the sulfoxide. Others include primary alkylamines such as N-dodecylamine and octan-1-amine that are sequentially monooxygenated to oximes through intermediate hydroxylamines and both steps are NADPH- and oxygen-dependent. Also metabolized N-Deacetyl ketoconazole (DAK) to N-hydroxy-DAK and appears to further metabolizes N-hydroxy-DAK to two others metabolites. Also catalyzes S-oxygenation of the thioether-containing organophosphate insecticides, phorate and disulfoton. The protein is Dimethylaniline monooxygenase [N-oxide-forming] 2 of Oryctolagus cuniculus (Rabbit).